A 129-amino-acid polypeptide reads, in one-letter code: Large ribosomal subunit protein bL12 (129 aa).

Belongs to the bacterial ribosomal protein bL12 family. Homodimer. Part of the ribosomal stalk of the 50S ribosomal subunit. Forms a multimeric L10(L12)X complex, where L10 forms an elongated spine to which 2 to 4 L12 dimers bind in a sequential fashion. Binds GTP-bound translation factors.

Functionally, forms part of the ribosomal stalk which helps the ribosome interact with GTP-bound translation factors. Is thus essential for accurate translation. This chain is Large ribosomal subunit protein bL12, found in Treponema denticola (strain ATCC 35405 / DSM 14222 / CIP 103919 / JCM 8153 / KCTC 15104).